The following is a 259-amino-acid chain: PKHD-type hydroxylase PsycPRwf_1523 (259 aa).

The 101-residue stretch at 80–180 (VIMPPLFSAY…RLAMVTWVQS (101 aa)) folds into the Fe2OG dioxygenase domain. Fe cation contacts are provided by H98, D100, and H161. R171 is a binding site for 2-oxoglutarate.

It depends on Fe(2+) as a cofactor. L-ascorbate serves as cofactor.

The protein is PKHD-type hydroxylase PsycPRwf_1523 of Psychrobacter sp. (strain PRwf-1).